Here is a 167-residue protein sequence, read N- to C-terminus: Leptin (167 aa).

Positions Met-1–Ala-21 are cleaved as a signal peptide. Cys-117 and Cys-167 are disulfide-bonded.

Belongs to the leptin family.

It localises to the secreted. Key player in the regulation of energy balance and body weight control. Once released into the circulation, has central and peripheral effects by binding LEPR, found in many tissues, which results in the activation of several major signaling pathways. In the hypothalamus, acts as an appetite-regulating factor that induces a decrease in food intake and an increase in energy consumption by inducing anorexinogenic factors and suppressing orexigenic neuropeptides, also regulates bone mass and secretion of hypothalamo-pituitary-adrenal hormones. In the periphery, increases basal metabolism, influences reproductive function, regulates pancreatic beta-cell function and insulin secretion, is pro-angiogenic for endothelial cell and affects innate and adaptive immunity. In the arcuate nucleus of the hypothalamus, activates by depolarization POMC neurons inducing FOS and SOCS3 expression to release anorexigenic peptides and inhibits by hyperpolarization NPY neurons inducing SOCS3 with a consequent reduction on release of orexigenic peptides. In addition to its known satiety inducing effect, has a modulatory role in nutrient absorption. In the intestine, reduces glucose absorption by enterocytes by activating PKC and leading to a sequential activation of p38, PI3K and ERK signaling pathways which exerts an inhibitory effect on glucose absorption. Acts as a growth factor on certain tissues, through the activation of different signaling pathways increases expression of genes involved in cell cycle regulation such as CCND1, via JAK2-STAT3 pathway, or VEGFA, via MAPK1/3 and PI3K-AKT1 pathways. May also play an apoptotic role via JAK2-STAT3 pathway and up-regulation of BIRC5 expression. Pro-angiogenic, has mitogenic activity on vascular endothelial cells and plays a role in matrix remodeling by regulating the expression of matrix metalloproteinases (MMPs) and tissue inhibitors of metalloproteinases (TIMPs). In innate immunity, modulates the activity and function of neutrophils by increasing chemotaxis and the secretion of oxygen radicals. Increases phagocytosis by macrophages and enhances secretion of pro-inflammatory mediators. Increases cytotoxic ability of NK cells. Plays a pro-inflammatory role, in synergy with IL1B, by inducing NOS2 which promotes the production of IL6, IL8 and Prostaglandin E2, through a signaling pathway that involves JAK2, PI3K, MAP2K1/MEK1 and MAPK14/p38. In adaptive immunity, promotes the switch of memory T-cells towards T helper-1 cell immune responses. Increases CD4(+)CD25(-) T-cell proliferation and reduces autophagy during TCR (T-cell receptor) stimulation, through MTOR signaling pathway activation and BCL2 up-regulation. In Rattus norvegicus (Rat), this protein is Leptin (Lep).